Reading from the N-terminus, the 721-residue chain is Oviduct-specific glycoprotein (721 aa).

Positions 1–21 are cleaved as a signal peptide; it reads MGRLLLLAGLVLLMKHSDGTA. The GH18 domain occupies 22-385; sequence YKLVCYFTNW…HILNELLVQT (364 aa). Cys26 and Cys51 are oxidised to a cystine. Residues 71-72, 98-101, Tyr142, 211-214, and Trp355 each bind chitin; these read LQ, GGWN, and LSYD. N-linked (GlcNAc...) asparagine glycans are attached at residues Asn402 and Asn442. Residues 444–456 are compositionally biased toward polar residues; sequence TTVPSDGSVTPGG. The interval 444 to 465 is disordered; the sequence is TTVPSDGSVTPGGTASPRKHAV. The N-linked (GlcNAc...) asparagine glycan is linked to Asn469. Tandem repeats lie at residues 486 to 492, 493 to 499, 500 to 506, 507 to 513, 514 to 520, 521 to 527, 528 to 534, 535 to 541, 542 to 548, 549 to 555, 556 to 562, 563 to 569, 570 to 576, 577 to 583, 584 to 590, 591 to 597, 598 to 604, 605 to 611, 612 to 618, 619 to 625, and 626 to 632. The tract at residues 486–632 is 21 X 7 AA tandem repeats of S-K-[TAI]-[TI]-[TAP]-[GED]-[IVM]; that stretch reads SKTTTGVSKT…PGISKTTPGM (147 aa).

The protein belongs to the glycosyl hydrolase 18 family. In terms of tissue distribution, epithelial cells of the oviduct.

The protein localises to the cytoplasmic vesicle. The protein resides in the secretory vesicle. In terms of biological role, binds to oocyte zona pellucida in vivo. May play a role in the fertilization process and/or early embryonic development. The sequence is that of Oviduct-specific glycoprotein (Ovgp1) from Mus musculus (Mouse).